Here is a 148-residue protein sequence, read N- to C-terminus: MLRLLSKRFYCKIATKSNEKATKLDFKQLTHPTKVPQTPVDAEFPDTSASEIQIDTKTIQLLERLSLVDLDSERALATLKSSIQFADKIAHINTDHVRPLYTVLEHQQLQLRNDQVTEGDCRAEVLRNAKVTDEDYYVSPPGNIPLEQ.

It belongs to the GatC family. As to quaternary structure, subunit of the heterotrimeric GatCAB amidotransferase (AdT) complex, composed of A, B and C subunits.

The protein localises to the mitochondrion. It catalyses the reaction L-glutamyl-tRNA(Gln) + L-glutamine + ATP + H2O = L-glutaminyl-tRNA(Gln) + L-glutamate + ADP + phosphate + H(+). Allows the formation of correctly charged Gln-tRNA(Gln) through the transamidation of misacylated Glu-tRNA(Gln) in the mitochondria. The reaction takes place in the presence of glutamine and ATP through an activated gamma-phospho-Glu-tRNA(Gln). This chain is Glutamyl-tRNA(Gln) amidotransferase subunit C, mitochondrial, found in Drosophila simulans (Fruit fly).